Reading from the N-terminus, the 346-residue chain is MLQEKELVKQKAKELLLDLLSIYTPSKSEANATKFFEKISKDLNLKLEILPDSNSFILGEGDILLASHVDTVYGYIEPKIENELIYGRGAVDAKGPLISMIIATWLLNEKGIKVRVSGLADEESTSIGAKELIAKNYNFKYIIVGEPSNATDIVVEYRGSIQLDIMCEGTPEHSSSAKNNLIVDISKKIIEVYKQPENYDKPSIVPTIIRAGESYNVTPAKLYLHLDIRYAINNKREDLIKEITDKFPECNLKIVDETPPVKVSINNPVVKSLARALLKQNIKPRLVKKAGTSDMNILQRITTNIATYGPGNSMLEHTTQEKISLDEIYIGVKTYMLAIEELWQKI.

Histidine 68 is a binding site for Zn(2+). Aspartate 70 is a catalytic residue. Aspartate 92 contacts Zn(2+). The Proton acceptor role is filled by glutamate 122. 3 residues coordinate Zn(2+): glutamate 123, glutamate 146, and histidine 317.

It belongs to the peptidase M20A family. LysK subfamily. It depends on Zn(2+) as a cofactor. Requires Co(2+) as cofactor.

Its subcellular location is the cytoplasm. The catalysed reaction is [amino-group carrier protein]-C-terminal-gamma-(L-lysyl)-L-glutamate + H2O = [amino-group carrier protein]-C-terminal-L-glutamate + L-lysine. It catalyses the reaction [amino-group carrier protein]-C-terminal-gamma-(L-ornithyl)-L-glutamate + H2O = [amino-group carrier protein]-C-terminal-L-glutamate + L-ornithine. The protein operates within amino-acid biosynthesis; L-lysine biosynthesis via AAA pathway; L-lysine from L-alpha-aminoadipate (Thermus route): step 5/5. It participates in amino-acid biosynthesis; L-arginine biosynthesis. Functionally, catalyzes the release of L-lysine from [LysW]-gamma-L-lysine and the release of L-ornithine from [LysW]-L-ornithine. This chain is [LysW]-lysine/[LysW]-ornithine hydrolase, found in Saccharolobus solfataricus (strain ATCC 35092 / DSM 1617 / JCM 11322 / P2) (Sulfolobus solfataricus).